A 245-amino-acid chain; its full sequence is Probable phosphatase KPK_3500 (245 aa).

His7, His9, His15, His40, Glu73, His101, His131, Asp192, and His194 together coordinate Zn(2+).

The protein belongs to the PHP family. In terms of assembly, homotrimer. Zn(2+) is required as a cofactor.

The chain is Probable phosphatase KPK_3500 from Klebsiella pneumoniae (strain 342).